Reading from the N-terminus, the 144-residue chain is Cytochrome c3 (144 aa).

An N-terminal signal peptide occupies residues methionine 1–alanine 24. Heme c contacts are provided by histidine 51, histidine 54, cysteine 59, cysteine 62, histidine 63, histidine 64, cysteine 76, cysteine 81, histidine 82, histidine 100, cysteine 108, cysteine 111, histidine 112, cysteine 125, cysteine 128, and histidine 129.

Belongs to the cytochrome c family. As to quaternary structure, homodimer. Heterotrimer of cytochrome c3 FDH2C and formate dehydrogenase FDH2 alpha and beta subunits that forms the FdhABC(3) complex. In terms of processing, binds 4 heme c groups per subunit.

The protein resides in the periplasm. Participates in sulfate respiration coupled with phosphorylation by transferring electrons from the enzyme dehydrogenase to ferredoxin. Gamma chain of the formate dehydrogenase (FDH) that catalyzes the reversible two-electron oxidation of formate to carbon dioxide. The gamma subunit of formate dehydrogenase forms a c-type heme. This Nitratidesulfovibrio vulgaris (strain ATCC 29579 / DSM 644 / CCUG 34227 / NCIMB 8303 / VKM B-1760 / Hildenborough) (Desulfovibrio vulgaris) protein is Cytochrome c3.